The primary structure comprises 298 residues: MYGVGVGGGGGGNYDGGGGNASSLFGGGGFMPSQATNAAEGTSGGGGGFPKSRNAQALLPLTVKQIMDASQTNDDKSNFAVNGMEVSTVRLVGRMLNKLDRVTDVSFTLDDGTGRVPVNRWENDSTDTKEMADIQNGDYVIVNGGLKGFQGKRQVVAYSVRRITNFNDVTHHFLHCVHVHLELTRPKSQVNANTATGTPNQTMPRDSMAYNQSPLTNQASTFSAPQNTGTGTNMIDLVLNVFHDPAVMNDDHGVGVDYVSRRLNLPEETVGKIIIDQVDLGHLYATIDDHHYKSTMNG.

A DNA-binding region (OB) is located at residues 89-163 (VRLVGRMLNK…QVVAYSVRRI (75 aa)).

This sequence belongs to the replication factor A protein 2 family. As to quaternary structure, heterotrimer of RPA1, RPA2 and RPA3 (canonical replication protein A complex). Interacts with RPA1A and RPA3. Post-translationally, phosphorylated in a cell-cycle-dependent manner (from the S phase until mitosis). In response to DNA damage, recruited to DNA-repair nuclear foci, as a hypophosphorylated form.

The protein localises to the nucleus. Its function is as follows. Component of the replication protein A complex (RPA) required for DNA recombination, repair and replication. The activity of RPA is mediated by single-stranded DNA binding and protein interactions. The sequence is that of Replication protein A 32 kDa subunit B (RPA2B) from Oryza sativa subsp. japonica (Rice).